Consider the following 405-residue polypeptide: GTPase Obg (405 aa).

The 159-residue stretch at 1–159 (MRFIDEAVVT…KVLKFELKVV (159 aa)) folds into the Obg domain. Positions 160-333 (ADVGLIGLPN…IKYHLMNEIE (174 aa)) constitute an OBG-type G domain. Residues 166 to 173 (GLPNAGKS), 191 to 195 (FTTLV), 213 to 216 (DIPG), 283 to 286 (NKID), and 314 to 316 (ATL) each bind GTP. Residues Ser173 and Thr193 each coordinate Mg(2+). A compositionally biased stretch (basic and acidic residues) spans 371–382 (YRAARKAAREGT). Residues 371–405 (YRAARKAAREGTDLSDDDFDDSDDDDDGVEVVYAP) are disordered. Residues 383 to 399 (DLSDDDFDDSDDDDDGV) show a composition bias toward acidic residues.

This sequence belongs to the TRAFAC class OBG-HflX-like GTPase superfamily. OBG GTPase family. As to quaternary structure, monomer. Mg(2+) serves as cofactor.

The protein localises to the cytoplasm. Its function is as follows. An essential GTPase which binds GTP, GDP and possibly (p)ppGpp with moderate affinity, with high nucleotide exchange rates and a fairly low GTP hydrolysis rate. Plays a role in control of the cell cycle, stress response, ribosome biogenesis and in those bacteria that undergo differentiation, in morphogenesis control. The chain is GTPase Obg from Psychrobacter cryohalolentis (strain ATCC BAA-1226 / DSM 17306 / VKM B-2378 / K5).